Consider the following 238-residue polypeptide: MSQSLIVALDFPGKQEVEQFLHHFEGEELFVKVGMELFYKEGPAIITYLKEKGHKIFLDLKLHDIPNTVKSAMRSLASLDVDMVNVHAAGGSSMMKAAIEGLEEGKQEGKERPICIAVTQLTSTSEAMMKKEIGIEKTLEEAVAHYAKLTKESGLDGVVCSTLEVPKLREVCGNEFVTVTPGIRLASDDVNDQVRVATPKRARELGSSYIVVGRSITKAENPLEAYKTVKQQWEGVTV.

Substrate contacts are provided by residues aspartate 10, lysine 32, aspartate 59–threonine 68, threonine 122, arginine 184, glutamine 193, glycine 213, and arginine 214. The Proton donor role is filled by lysine 61.

This sequence belongs to the OMP decarboxylase family. Type 1 subfamily. Homodimer.

The catalysed reaction is orotidine 5'-phosphate + H(+) = UMP + CO2. It participates in pyrimidine metabolism; UMP biosynthesis via de novo pathway; UMP from orotate: step 2/2. In terms of biological role, catalyzes the decarboxylation of orotidine 5'-monophosphate (OMP) to uridine 5'-monophosphate (UMP). The polypeptide is Orotidine 5'-phosphate decarboxylase (Bacillus cereus (strain B4264)).